The sequence spans 304 residues: Aquaglyceroporin-3 (304 aa).

The Cytoplasmic segment spans residues 1-68 (MQSQPDNVAY…LRLNYRDYMG (68 aa)). The chain crosses the membrane as a helical span at residues 69–89 (ELLGTFVLLFMGNGVVATVII). Residues 90–95 (DGKLGF) lie on the Extracellular side of the membrane. A helical membrane pass occupies residues 96–116 (LSITLGWGIAVTMALYVSLGI). Residues 117–142 (SSGHLNPAVTVGNAVFGDFPWRKVPG) are Cytoplasmic-facing. Residues 143–163 (YIAAQMLGAFLGAACAYGVFA) form a helical membrane-spanning segment. At 164–196 (DLLKAHGGGELIAFGEKGTAGVFSTYPRDSNGL) the chain is on the extracellular side. The chain crosses the membrane as a helical span at residues 197–217 (FSCIFGEFICTAMLLFCVCGI). Residues 218–231 (FDPNNSPAKGHEPL) lie on the Cytoplasmic side of the membrane. Residues 232–252 (AVGALVFAIGNNIGYSTGYAI) traverse the membrane as a helical segment. Over 253–277 (NPARDFGPRVFSSFLYGGEVFSHAN) the chain is Extracellular. A helical membrane pass occupies residues 278–298 (YYFWVPLVIPLFGGIFGLFLY). Over 299 to 304 (KYFVPH) the chain is Cytoplasmic.

It belongs to the MIP/aquaporin (TC 1.A.8) family.

The protein resides in the cell membrane. The enzyme catalyses glycerol(in) = glycerol(out). The catalysed reaction is H2O(in) = H2O(out). It carries out the reaction urea(in) = urea(out). Mediates water and glycerol transport across the cell membrane. Permeable to urea. Permeable to methylamine/methylammonium. Permeable to dihydroxyacetone. Permeable to erythritol and ribitol. This Trypanosoma brucei brucei protein is Aquaglyceroporin-3.